The following is a 428-amino-acid chain: Dihydroorotase (428 aa).

Zn(2+) contacts are provided by histidine 59 and histidine 61. Residues 61-63 and asparagine 93 contribute to the substrate site; that span reads HLR. Residues aspartate 151, histidine 178, and histidine 231 each contribute to the Zn(2+) site. Residue asparagine 277 participates in substrate binding. Residue aspartate 304 coordinates Zn(2+). Residue aspartate 304 is part of the active site. Substrate contacts are provided by residues histidine 308 and 322–323; that span reads FG.

This sequence belongs to the metallo-dependent hydrolases superfamily. DHOase family. Class I DHOase subfamily. The cofactor is Zn(2+).

It catalyses the reaction (S)-dihydroorotate + H2O = N-carbamoyl-L-aspartate + H(+). Its pathway is pyrimidine metabolism; UMP biosynthesis via de novo pathway; (S)-dihydroorotate from bicarbonate: step 3/3. Its function is as follows. Catalyzes the reversible cyclization of carbamoyl aspartate to dihydroorotate. This Bacillus anthracis (strain A0248) protein is Dihydroorotase.